Here is a 212-residue protein sequence, read N- to C-terminus: MKLSKYIDHTLLKPQATEKDILKLIEEAKTYDFASVCVNPSWVKLAYENLKDTDVKVCTVVGFPLGATSTASKVYETKVAIKDGADEIDMVISVGQLKSGNDEYVKEEIKKIVEASKNKLVKVIIETCLLTEEEKVKACTLSKEAGADYVKTSTGFSTGGAKPEDIKLMRETVGKDMGVKASGGIHTREEMEVMIENGATRIGASCGVELVK.

D89 functions as the Proton donor/acceptor in the catalytic mechanism. The Schiff-base intermediate with acetaldehyde role is filled by K151. The Proton donor/acceptor role is filled by K180.

This sequence belongs to the DeoC/FbaB aldolase family. DeoC type 1 subfamily.

The protein resides in the cytoplasm. The catalysed reaction is 2-deoxy-D-ribose 5-phosphate = D-glyceraldehyde 3-phosphate + acetaldehyde. It functions in the pathway carbohydrate degradation; 2-deoxy-D-ribose 1-phosphate degradation; D-glyceraldehyde 3-phosphate and acetaldehyde from 2-deoxy-alpha-D-ribose 1-phosphate: step 2/2. In terms of biological role, catalyzes a reversible aldol reaction between acetaldehyde and D-glyceraldehyde 3-phosphate to generate 2-deoxy-D-ribose 5-phosphate. The polypeptide is Deoxyribose-phosphate aldolase (Clostridium botulinum (strain ATCC 19397 / Type A)).